A 289-amino-acid chain; its full sequence is Probable aquaporin PIP-type 7a (289 aa).

The interval 1–39 (MEAKEQDVSLGANKFPERQPLGIAAQSQDEPKDYQEPPP) is disordered. Over 1–57 (MEAKEQDVSLGANKFPERQPLGIAAQSQDEPKDYQEPPPAPLFEPSELTSWSFYRAG) the chain is Cytoplasmic. A helical transmembrane segment spans residues 58 to 78 (IAEFIATFLFLYITVLTVMGV). Topologically, residues 79–91 (VRESSKCKTVGIQ) are extracellular. Residues 92-112 (GIAWAFGGMIFALVYCTAGIS) traverse the membrane as a helical segment. The Cytoplasmic segment spans residues 113 to 135 (GGHINPAVTFGLFLARKLSLTRA). Positions 117–119 (NPA) match the NPA 1 motif. Residues 136-156 (IFYMVMQVLGAICGAGVVKGF) form a helical membrane-spanning segment. Residues 157–178 (EGKQRFGDLNGGANFVAPGYTK) lie on the Extracellular side of the membrane. A helical transmembrane segment spans residues 179 to 199 (GDGLGAEIVGTFILVYTVFSA). The Cytoplasmic portion of the chain corresponds to 200-212 (TDAKRSARDSHVP). Residues 213–233 (ILAPLPIGFAVFLVHLATIPI) traverse the membrane as a helical segment. Residues 234–260 (TGTGINPARSLGAAIVFNKKIGWNDHW) lie on the Extracellular side of the membrane. The NPA 2 signature appears at 239 to 241 (NPA). The helical transmembrane segment at 261-281 (IFWVGPFIGAALAALYHQVVI) threads the bilayer. At 282–289 (RAIPFKSK) the chain is on the cytoplasmic side.

The protein belongs to the MIP/aquaporin (TC 1.A.8) family. PIP (TC 1.A.8.11) subfamily.

The protein localises to the cell membrane. Aquaporins facilitate the transport of water and small neutral solutes across cell membranes. In Pisum sativum (Garden pea), this protein is Probable aquaporin PIP-type 7a (TRG-31).